Reading from the N-terminus, the 92-residue chain is Exodeoxyribonuclease 7 small subunit (92 aa).

Positions 1–22 are disordered; it reads MPKKNAISESTNSTPETAPAMT. The segment covering 7 to 16 has biased composition (polar residues); the sequence is ISESTNSTPE.

The protein belongs to the XseB family. In terms of assembly, heterooligomer composed of large and small subunits.

The protein localises to the cytoplasm. The catalysed reaction is Exonucleolytic cleavage in either 5'- to 3'- or 3'- to 5'-direction to yield nucleoside 5'-phosphates.. Functionally, bidirectionally degrades single-stranded DNA into large acid-insoluble oligonucleotides, which are then degraded further into small acid-soluble oligonucleotides. This Photorhabdus laumondii subsp. laumondii (strain DSM 15139 / CIP 105565 / TT01) (Photorhabdus luminescens subsp. laumondii) protein is Exodeoxyribonuclease 7 small subunit.